A 166-amino-acid chain; its full sequence is Probable glucosamine 6-phosphate N-acetyltransferase 2 (166 aa).

Residues 21 to 166 (VQIRRLEATD…EKGVQMAIYF (146 aa)) enclose the N-acetyltransferase domain. Residues S43, 93 to 96 (KFLR), and 105 to 107 (EDV) contribute to the substrate site. Position 115–120 (115–120 (GRGLGL)) interacts with acetyl-CoA. 136–137 (YK) is a binding site for substrate. Position 150-152 (150-152 (YAK)) interacts with acetyl-CoA.

The protein belongs to the acetyltransferase family. GNA1 subfamily. Homodimer.

Its subcellular location is the endoplasmic reticulum membrane. It carries out the reaction D-glucosamine 6-phosphate + acetyl-CoA = N-acetyl-D-glucosamine 6-phosphate + CoA + H(+). Its pathway is nucleotide-sugar biosynthesis; UDP-N-acetyl-alpha-D-glucosamine biosynthesis; N-acetyl-alpha-D-glucosamine 1-phosphate from alpha-D-glucosamine 6-phosphate (route I): step 1/2. Acetyltransferase involved in UDP-N-acetylglucosamine (UDP-GlcNAc) biosynthesis. UDP-GlcNAc is an essential metabolite that serves as an initial sugar donor of N-glycan synthesis and thus plays an important role in protein and lipid glycosylation. In Oryza sativa subsp. japonica (Rice), this protein is Probable glucosamine 6-phosphate N-acetyltransferase 2.